The chain runs to 105 residues: Ketoisovalerate oxidoreductase subunit VorD (105 aa).

4Fe-4S ferredoxin-type domains follow at residues 44-73 (FMPV…IKED) and 74-103 (GFVA…MVRE). Residues Cys53, Cys56, Cys59, Cys63, Cys83, Cys86, Cys89, and Cys93 each coordinate [4Fe-4S] cluster.

Heterotetramer of one alpha, one beta, one delta and one gamma chain. The cofactor is [4Fe-4S] cluster.

It carries out the reaction 3-methyl-2-oxobutanoate + 2 oxidized [2Fe-2S]-[ferredoxin] + CoA = 2-methylpropanoyl-CoA + 2 reduced [2Fe-2S]-[ferredoxin] + CO2 + H(+). This chain is Ketoisovalerate oxidoreductase subunit VorD (vorD), found in Pyrococcus horikoshii (strain ATCC 700860 / DSM 12428 / JCM 9974 / NBRC 100139 / OT-3).